We begin with the raw amino-acid sequence, 408 residues long: Solute carrier family 35 member F1 (408 aa).

Residues 1–21 form a disordered region; it reads MIPPEQPQQQLQPPSPAPPNH. A run of 10 helical transmembrane segments spans residues 60-80, 94-114, 129-147, 158-178, 186-206, 221-241, 247-267, 284-304, 311-331, and 335-355; these read MLIS…IGLT, VFQS…TLAV, WWKY…YLVV, IQLL…FFLL, FIGI…DVLV, LLVL…EYII, VEFL…QLAI, LLYV…PVVI, SVNL…LFLF, and FSGL…LYSS.

It belongs to the SLC35F solute transporter family.

The protein localises to the cytoplasmic vesicle. It is found in the secretory vesicle. Its subcellular location is the synaptic vesicle membrane. Functionally, putative solute transporter. The polypeptide is Solute carrier family 35 member F1 (SLC35F1) (Homo sapiens (Human)).